The sequence spans 296 residues: Transposase for insertion sequence element IS629 (296 aa).

Residues Val125 to Tyr285 enclose the Integrase catalytic domain.

Involved in the transposition of the insertion sequence. The polypeptide is Transposase for insertion sequence element IS629 (Shigella sonnei).